The following is a 219-amino-acid chain: uncharacterized protein (219 aa).

The first 17 residues, 1–17 (MFKKIIILFLGIFLLSS), serve as a signal peptide directing secretion. Residue C18 is the site of N-palmitoyl cysteine attachment. Residue C18 is the site of S-diacylglycerol cysteine attachment. A disordered region spans residues 110 to 136 (KAESNATQSNNDMTLSKANKKVRKDDS). The span at 112-126 (ESNATQSNNDMTLSK) shows a compositional bias: polar residues. Residues 137 to 165 (YKEKKIEEELNQIKAMLRETKRDITKYTC) are a coiled coil.

The protein resides in the cell membrane. This is an uncharacterized protein from Rickettsia prowazekii (strain Madrid E).